Here is a 422-residue protein sequence, read N- to C-terminus: Probable tRNA pseudouridine synthase D 2 (422 aa).

D89 functions as the Nucleophile in the catalytic mechanism. Positions 160 to 371 (GAPNYFDSQR…IYSERKILSI (212 aa)) constitute a TRUD domain.

It belongs to the pseudouridine synthase TruD family.

It catalyses the reaction uridine(13) in tRNA = pseudouridine(13) in tRNA. Its function is as follows. Could be responsible for synthesis of pseudouridine from uracil-13 in transfer RNAs. In Methanocaldococcus jannaschii (strain ATCC 43067 / DSM 2661 / JAL-1 / JCM 10045 / NBRC 100440) (Methanococcus jannaschii), this protein is Probable tRNA pseudouridine synthase D 2.